Consider the following 195-residue polypeptide: Probable GTP-binding protein EngB (195 aa).

In terms of domain architecture, EngB-type G spans 22-194 (LKGEVAFVGR…LDLISTLLKE (173 aa)). Residues 30–37 (GRSNVGKS), 56–60 (GKTRS), 74–77 (DLPG), 141–144 (TKMD), and 173–175 (TSS) each bind GTP. Mg(2+)-binding residues include S37 and T58.

The protein belongs to the TRAFAC class TrmE-Era-EngA-EngB-Septin-like GTPase superfamily. EngB GTPase family. Mg(2+) serves as cofactor.

Necessary for normal cell division and for the maintenance of normal septation. The polypeptide is Probable GTP-binding protein EngB (Thermotoga maritima (strain ATCC 43589 / DSM 3109 / JCM 10099 / NBRC 100826 / MSB8)).